We begin with the raw amino-acid sequence, 185 residues long: Guanylate kinase (185 aa).

One can recognise a Guanylate kinase-like domain in the interval 3–181 (TRMIIVAAPS…SYGEFKKIVE (179 aa)). 10–17 (APSGAGKS) contacts ATP.

The protein belongs to the guanylate kinase family.

It localises to the cytoplasm. The catalysed reaction is GMP + ATP = GDP + ADP. Its function is as follows. Essential for recycling GMP and indirectly, cGMP. This Bdellovibrio bacteriovorus (strain ATCC 15356 / DSM 50701 / NCIMB 9529 / HD100) protein is Guanylate kinase.